A 189-amino-acid chain; its full sequence is dCTP deaminase (189 aa).

DCTP is bound by residues 112–117, 136–138, Q157, Y171, and Q181; these read KSTYAR and TLE. The active-site Proton donor/acceptor is the E138.

It belongs to the dCTP deaminase family. As to quaternary structure, homotrimer.

It catalyses the reaction dCTP + H2O + H(+) = dUTP + NH4(+). It participates in pyrimidine metabolism; dUMP biosynthesis; dUMP from dCTP (dUTP route): step 1/2. Functionally, catalyzes the deamination of dCTP to dUTP. This Burkholderia mallei (strain NCTC 10247) protein is dCTP deaminase.